A 698-amino-acid chain; its full sequence is Polyribonucleotide nucleotidyltransferase (698 aa).

Residues Asp490 and Asp496 each contribute to the Mg(2+) site. Positions 557-616 (PKVVTMTIKPDKIRDVIGPGGKKINEIIDETGVKLDIEQDGTIFIGAVDQAMINRAREII) constitute a KH domain. The region spanning 626 to 694 (GQTYQATVKR…KQGRVNASHR (69 aa)) is the S1 motif domain.

The protein belongs to the polyribonucleotide nucleotidyltransferase family. It depends on Mg(2+) as a cofactor.

It localises to the cytoplasm. It catalyses the reaction RNA(n+1) + phosphate = RNA(n) + a ribonucleoside 5'-diphosphate. Involved in mRNA degradation. Catalyzes the phosphorolysis of single-stranded polyribonucleotides processively in the 3'- to 5'-direction. The sequence is that of Polyribonucleotide nucleotidyltransferase from Staphylococcus aureus (strain bovine RF122 / ET3-1).